A 242-amino-acid polypeptide reads, in one-letter code: NAD-dependent protein deacetylase (242 aa).

The region spanning 1–242 is the Deacetylase sirtuin-type domain; sequence MQQFEEVHSI…EFVEGLSSRK (242 aa). NAD(+) is bound by residues Ala-23, Thr-27, Phe-34, Arg-35, Gln-102, Ile-104, Asp-105, and His-120. Nicotinamide is bound at residue Phe-34. Nicotinamide-binding residues include Ile-104 and Asp-105. Catalysis depends on His-120, which acts as the Proton acceptor. Positions 128, 131, 148, and 151 each coordinate Zn(2+). NAD(+) is bound by residues Thr-187, Ser-188, Asn-213, and Ile-231.

This sequence belongs to the sirtuin family. Class U subfamily. Zn(2+) serves as cofactor.

The protein localises to the cytoplasm. The catalysed reaction is N(6)-acetyl-L-lysyl-[protein] + NAD(+) + H2O = 2''-O-acetyl-ADP-D-ribose + nicotinamide + L-lysyl-[protein]. Functionally, NAD-dependent protein deacetylase which modulates the activities of several enzymes which are inactive in their acetylated form. This is NAD-dependent protein deacetylase from Bacillus cereus (strain ATCC 10987 / NRS 248).